A 338-amino-acid chain; its full sequence is Peroxidase 15 (338 aa).

The first 22 residues, 1–22 (MARIGSFLIILYLIYALTLCIC), serve as a signal peptide directing secretion. 4 cysteine pairs are disulfide-bonded: Cys-45–Cys-125, Cys-78–Cys-83, Cys-131–Cys-332, and Cys-210–Cys-242. His-76 functions as the Proton acceptor in the catalytic mechanism. 5 residues coordinate Ca(2+): Asp-77, Val-80, Gly-82, Asp-84, and Ser-86. Substrate is bound at residue Pro-173. Asn-176 is a glycosylation site (N-linked (GlcNAc...) asparagine). His-203 contacts heme b. Residue Thr-204 participates in Ca(2+) binding. Asn-219 and Asn-250 each carry an N-linked (GlcNAc...) asparagine glycan. Ca(2+)-binding residues include Asp-255, Ser-258, and Asp-263.

The protein belongs to the peroxidase family. Classical plant (class III) peroxidase subfamily. The cofactor is heme b. Ca(2+) serves as cofactor.

Its subcellular location is the secreted. The enzyme catalyses 2 a phenolic donor + H2O2 = 2 a phenolic radical donor + 2 H2O. Functionally, removal of H(2)O(2), oxidation of toxic reductants, biosynthesis and degradation of lignin, suberization, auxin catabolism, response to environmental stresses such as wounding, pathogen attack and oxidative stress. These functions might be dependent on each isozyme/isoform in each plant tissue. The sequence is that of Peroxidase 15 (PER15) from Arabidopsis thaliana (Mouse-ear cress).